The following is a 962-amino-acid chain: Integrator complex subunit 7 (962 aa).

Phosphoserine is present on residues Ser338 and Ser809.

It belongs to the Integrator subunit 7 family. In terms of assembly, component of the Integrator complex, composed of core subunits INTS1, INTS2, INTS3, INTS4, INTS5, INTS6, INTS7, INTS8, INTS9/RC74, INTS10, INTS11/CPSF3L, INTS12, INTS13, INTS14 and INTS15. The core complex associates with protein phosphatase 2A subunits PPP2CA and PPP2R1A, to form the Integrator-PP2A (INTAC) complex. Interacts with NABP2.

It localises to the nucleus. It is found in the chromosome. Its subcellular location is the cytoplasm. Functionally, component of the integrator complex, a multiprotein complex that terminates RNA polymerase II (Pol II) transcription in the promoter-proximal region of genes. The integrator complex provides a quality checkpoint during transcription elongation by driving premature transcription termination of transcripts that are unfavorably configured for transcriptional elongation: the complex terminates transcription by (1) catalyzing dephosphorylation of the C-terminal domain (CTD) of Pol II subunit POLR2A/RPB1 and SUPT5H/SPT5, (2) degrading the exiting nascent RNA transcript via endonuclease activity and (3) promoting the release of Pol II from bound DNA. The integrator complex is also involved in terminating the synthesis of non-coding Pol II transcripts, such as enhancer RNAs (eRNAs), small nuclear RNAs (snRNAs), telomerase RNAs and long non-coding RNAs (lncRNAs). May be not involved in the recruitment of cytoplasmic dynein to the nuclear envelope by different components of the INT complex. Plays a role in DNA damage response (DDR) signaling during the S phase. This Bos taurus (Bovine) protein is Integrator complex subunit 7 (INTS7).